The chain runs to 374 residues: uncharacterized protein (374 aa).

Residues 39–66 (RDVRKHLESRDAKQELIDSLEEAVRDSR) adopt a coiled-coil conformation.

This is an uncharacterized protein from Mycobacterium tuberculosis (strain CDC 1551 / Oshkosh).